The following is a 333-amino-acid chain: Photosystem II assembly protein Ycf48 (333 aa).

Residues 1–25 form the signal peptide; sequence MRVKMFKPLRLVLLIAVSVLLMAAR.

The protein belongs to the Ycf48 family. In terms of assembly, part of early PSII assembly complexes which includes D1 (psbA) and PsbI; not found in mature PSII. Binds to the lumenal side of PSII complexes. Interacts with YidC.

It localises to the cellular thylakoid lumen. Its function is as follows. A factor required for optimal assembly of photosystem II (PSII), acting in the early stages of PSII assembly. Also plays a role in replacement of photodamaged D1 (psbA). Assists YidC in synthesis of chlorophyll-binding proteins. This Synechococcus sp. (strain JA-2-3B'a(2-13)) (Cyanobacteria bacterium Yellowstone B-Prime) protein is Photosystem II assembly protein Ycf48.